The primary structure comprises 285 residues: MFSPADLFRAAVFSMGPESRARDSVRGPELSHREDGSGRTQEQDKPHCPCNHVLGQDCLDGQILGQLRPLSEEEESSGAAFLGEPAFPEMDSEDLRLASFYDWPSTAGIQPEPLAAAGFFHTGQQDKVRCFFCYGGLQSWERGDDPWTEHARWFPRCQFLLRSKGRDFVERIQTYTPLLGSWDQREEPEDAVSATPSAPAHGSPELLRSRRETQPEDVSEPGAKDVQEQLRQLQEERRCKVCLDRAVSIVFVPCGHFVCTECAPNLQLCPICRVPICSCVRTFLS.

The disordered stretch occupies residues 18-47; it reads ESRARDSVRGPELSHREDGSGRTQEQDKPH. Residues 19-47 show a composition bias toward basic and acidic residues; it reads SRARDSVRGPELSHREDGSGRTQEQDKPH. A BIR repeat occupies 96–161; the sequence is RLASFYDWPS…RWFPRCQFLL (66 aa). Zn(2+) is bound by residues Cys130, Cys133, His150, and Cys157. The segment at 184-225 is disordered; the sequence is QREEPEDAVSATPSAPAHGSPELLRSRRETQPEDVSEPGAKD. The segment at 239–273 adopts an RING-type zinc-finger fold; it reads CKVCLDRAVSIVFVPCGHFVCTECAPNLQLCPICR.

The protein belongs to the IAP family. Binds to caspase-9. Interaction with DIABLO/SMAC via the BIR domain disrupts binding to caspase-9 and apoptotic suppressor activity. Interacts with TAB1. In vitro, interacts with caspase-3 and caspase-7 via its BIR domain. Post-translationally, autoubiquitinated and undergoes proteasome-mediated degradation. The truncated protein (tLivin) not only loses its anti-apoptotic effect but also acquires a pro-apoptotic effect.

It is found in the nucleus. The protein resides in the cytoplasm. It localises to the golgi apparatus. The enzyme catalyses S-ubiquitinyl-[E2 ubiquitin-conjugating enzyme]-L-cysteine + [acceptor protein]-L-lysine = [E2 ubiquitin-conjugating enzyme]-L-cysteine + N(6)-ubiquitinyl-[acceptor protein]-L-lysine.. Apoptotic regulator capable of exerting proapoptotic and anti-apoptotic activities and plays crucial roles in apoptosis, cell proliferation, and cell cycle control. Its anti-apoptotic activity is mediated through the inhibition of CASP3, CASP7 and CASP9, as well as by its E3 ubiquitin-protein ligase activity. As it is a weak caspase inhibitor, its anti-apoptotic activity is thought to be due to its ability to ubiquitinate DIABLO/SMAC targeting it for degradation thereby promoting cell survival. May contribute to caspase inhibition, by blocking the ability of DIABLO/SMAC to disrupt XIAP/BIRC4-caspase interactions. Protects against apoptosis induced by TNF or by chemical agents such as adriamycin, etoposide or staurosporine. Suppression of apoptosis is mediated by activation of MAPK8/JNK1, and possibly also of MAPK9/JNK2. This activation depends on TAB1 and MAP3K7/TAK1. In vitro, inhibits CASP3 and proteolytic activation of pro-CASP9. In Mus musculus (Mouse), this protein is Baculoviral IAP repeat-containing protein 7 (Birc7).